The primary structure comprises 750 residues: MADTVENAVSTPDVEQPWAELGLSADEYQRIREILGRRPTGGELAMYSVMWSEHCSYKSSKKYLRRFGDLPQQTPLGPLLAGIGDNAGVVDIGNGLAVTFKAESHNHPSYVEPHQGAATGVGGIVRDIMAMGARPVGVMNALAFGPLDAPDTARVLPGVVSGIADYGNCLGLPTIGGQTLFDPTYYGNPLVNALCVGVLRHEDLQFAKASGVGNLVVLFGAATGGDGIGGASILASESFAAEGESKRPSVQVGDPFMEKLLIECTLDLFNAGVVEALQDFGAAGISCATSELASAGDGGMHVELDRVPLRDPNLAPEEILMSESQERMAAVVRPDQLDRFMEICAHWGVAATVIGEVTDTGRLHIDWQGERIVDVDPRTVAHDGPVLDMPAARPWWIDELNEDDANALPRDNSGEGLAGALLALVGSAQLCDRSWITDQYDRFVRGNTVLAQPNDAGMIRIDDNLGIALSLDANGRQTTLNPYLGAQLALCEAYRNVAVSGATPVAVTDCLNYGSPYDPDVMWQFDETILGLVDGCRELGVPVTGGNVSLHNRTGDESIRPTPLVGVLGVIDDVHRRIPSAFAHDGDAVLLLGTTKCEFGGSVYEDVIHAGHLGGMPPMPDLNAEKALAAVMVEASKRGLLSSAHDLSDGGLAQALVESCLQGGLGVSVSLPEGEPSVMLFSETPARAIVSLCGNGYREFKELCQEHGVPTARIGEVIDHGEIEVNGLFSLPLDEIERAWRKPIPTAMGE.

H54 is a catalytic residue. Positions 57 and 101 each coordinate ATP. E103 lines the Mg(2+) pocket. Residues 104–107 and R126 contribute to the substrate site; that span reads SHNH. H105 acts as the Proton acceptor in catalysis. Mg(2+) is bound at residue D127. Residue Q251 participates in substrate binding. Mg(2+) is bound at residue D279. 323-325 provides a ligand contact to substrate; that stretch reads ESQ. Residues D509 and G546 each coordinate ATP. N547 is a Mg(2+) binding site. S549 contacts substrate.

It belongs to the FGAMS family. In terms of assembly, monomer. Part of the FGAM synthase complex composed of 1 PurL, 1 PurQ and 2 PurS subunits.

The protein localises to the cytoplasm. It catalyses the reaction N(2)-formyl-N(1)-(5-phospho-beta-D-ribosyl)glycinamide + L-glutamine + ATP + H2O = 2-formamido-N(1)-(5-O-phospho-beta-D-ribosyl)acetamidine + L-glutamate + ADP + phosphate + H(+). Its pathway is purine metabolism; IMP biosynthesis via de novo pathway; 5-amino-1-(5-phospho-D-ribosyl)imidazole from N(2)-formyl-N(1)-(5-phospho-D-ribosyl)glycinamide: step 1/2. Functionally, part of the phosphoribosylformylglycinamidine synthase complex involved in the purines biosynthetic pathway. Catalyzes the ATP-dependent conversion of formylglycinamide ribonucleotide (FGAR) and glutamine to yield formylglycinamidine ribonucleotide (FGAM) and glutamate. The FGAM synthase complex is composed of three subunits. PurQ produces an ammonia molecule by converting glutamine to glutamate. PurL transfers the ammonia molecule to FGAR to form FGAM in an ATP-dependent manner. PurS interacts with PurQ and PurL and is thought to assist in the transfer of the ammonia molecule from PurQ to PurL. This is Phosphoribosylformylglycinamidine synthase subunit PurL from Cutibacterium acnes (strain DSM 16379 / KPA171202) (Propionibacterium acnes).